The chain runs to 168 residues: 6,7-dimethyl-8-ribityllumazine synthase (168 aa).

Residues Trp-31, 65–67, and 90–92 contribute to the 5-amino-6-(D-ribitylamino)uracil site; these read SFE and NVI. 95 to 96 serves as a coordination point for (2S)-2-hydroxy-3-oxobutyl phosphate; sequence ET. His-98 (proton donor) is an active-site residue. Phe-123 is a 5-amino-6-(D-ribitylamino)uracil binding site. Arg-137 serves as a coordination point for (2S)-2-hydroxy-3-oxobutyl phosphate.

This sequence belongs to the DMRL synthase family.

It carries out the reaction (2S)-2-hydroxy-3-oxobutyl phosphate + 5-amino-6-(D-ribitylamino)uracil = 6,7-dimethyl-8-(1-D-ribityl)lumazine + phosphate + 2 H2O + H(+). The protein operates within cofactor biosynthesis; riboflavin biosynthesis; riboflavin from 2-hydroxy-3-oxobutyl phosphate and 5-amino-6-(D-ribitylamino)uracil: step 1/2. Catalyzes the formation of 6,7-dimethyl-8-ribityllumazine by condensation of 5-amino-6-(D-ribitylamino)uracil with 3,4-dihydroxy-2-butanone 4-phosphate. This is the penultimate step in the biosynthesis of riboflavin. This is 6,7-dimethyl-8-ribityllumazine synthase from Christiangramia forsetii (strain DSM 17595 / CGMCC 1.15422 / KT0803) (Gramella forsetii).